We begin with the raw amino-acid sequence, 459 residues long: Chromosomal replication initiator protein DnaA (459 aa).

The segment at 1-90 is domain I, interacts with DnaA modulators; it reads MAVSLWQQCI…RPASKPAAPA (90 aa). The disordered stretch occupies residues 75-124; it reads RFDIGSRPASKPAAPAASTKSPVAPAAKSPSKPSFNSNEPAATANHRSNM. The span at 80–108 shows a compositional bias: low complexity; that stretch reads SRPASKPAAPAASTKSPVAPAAKSPSKPS. A domain II region spans residues 91 to 122; sequence ASTKSPVAPAAKSPSKPSFNSNEPAATANHRS. Residues 109–124 show a composition bias toward polar residues; that stretch reads FNSNEPAATANHRSNM. The segment at 123–339 is domain III, AAA+ region; that stretch reads NMNPTYQFDN…GALNRVIANA (217 aa). Residues glycine 167, glycine 169, lysine 170, and threonine 171 each contribute to the ATP site. A domain IV, binds dsDNA region spans residues 340-459; that stretch reads NFTGRPITID…YANLIRTLSS (120 aa).

It belongs to the DnaA family. As to quaternary structure, oligomerizes as a right-handed, spiral filament on DNA at oriC.

The protein resides in the cytoplasm. Functionally, plays an essential role in the initiation and regulation of chromosomal replication. ATP-DnaA binds to the origin of replication (oriC) to initiate formation of the DNA replication initiation complex once per cell cycle. Binds the DnaA box (a 9 base pair repeat at the origin) and separates the double-stranded (ds)DNA. Forms a right-handed helical filament on oriC DNA; dsDNA binds to the exterior of the filament while single-stranded (ss)DNA is stabiized in the filament's interior. The ATP-DnaA-oriC complex binds and stabilizes one strand of the AT-rich DNA unwinding element (DUE), permitting loading of DNA polymerase. After initiation quickly degrades to an ADP-DnaA complex that is not apt for DNA replication. Binds acidic phospholipids. The sequence is that of Chromosomal replication initiator protein DnaA from Shewanella loihica (strain ATCC BAA-1088 / PV-4).